Here is a 338-residue protein sequence, read N- to C-terminus: Tripartite motif-containing protein 44 (338 aa).

2 disordered regions span residues Met1–Glu25 and Ala72–Pro162. Over residues Glu95–Pro162 the composition is skewed to acidic residues. Residues Glu109–Glu153 are a coiled coil. The B box-type zinc finger occupies Val171–Leu212. 4 residues coordinate Zn(2+): Cys176, His179, Cys198, and His204. Positions Gln257–Glu322 form a coiled coil. The disordered stretch occupies residues Met307–Asp338. The segment covering Gly327–Asp338 has biased composition (acidic residues).

As to quaternary structure, interacts (via coiled coil) with TRIM17 (via coiled coil).

May play a role in the process of differentiation and maturation of neuronal cells. May regulate the activity of TRIM17. Is a negative regulator of PAX6 expression. This chain is Tripartite motif-containing protein 44 (TRIM44), found in Bos taurus (Bovine).